The chain runs to 124 residues: ATP synthase epsilon chain (124 aa).

This sequence belongs to the ATPase epsilon chain family. F-type ATPases have 2 components, CF(1) - the catalytic core - and CF(0) - the membrane proton channel. CF(1) has five subunits: alpha(3), beta(3), gamma(1), delta(1), epsilon(1). CF(0) has three main subunits: a, b and c.

The protein resides in the cell membrane. Functionally, produces ATP from ADP in the presence of a proton gradient across the membrane. The protein is ATP synthase epsilon chain of Streptomyces avermitilis (strain ATCC 31267 / DSM 46492 / JCM 5070 / NBRC 14893 / NCIMB 12804 / NRRL 8165 / MA-4680).